A 190-amino-acid polypeptide reads, in one-letter code: Potassium-transporting ATPase KdpC subunit (190 aa).

The chain crosses the membrane as a helical span at residues 13–33 (VGFLLLTLMCGVVYPGIVTIF).

The protein belongs to the KdpC family. In terms of assembly, the system is composed of three essential subunits: KdpA, KdpB and KdpC.

It localises to the cell membrane. Its function is as follows. Part of the high-affinity ATP-driven potassium transport (or Kdp) system, which catalyzes the hydrolysis of ATP coupled with the electrogenic transport of potassium into the cytoplasm. This subunit acts as a catalytic chaperone that increases the ATP-binding affinity of the ATP-hydrolyzing subunit KdpB by the formation of a transient KdpB/KdpC/ATP ternary complex. This is Potassium-transporting ATPase KdpC subunit from Listeria monocytogenes serotype 4a (strain HCC23).